The primary structure comprises 503 residues: Probable protein kinase UbiB (503 aa).

Residues 13–35 form a helical membrane-spanning segment; the sequence is TFYRYRLAGLCASLMGSGWICAL. The region spanning 120–491 is the Protein kinase domain; sequence EFETEPIASA…QQRQSLWLAV (372 aa). ATP is bound by residues 126 to 134 and Lys-148; that span reads IASASIAQV. The active-site Proton acceptor is the Asp-283. The chain crosses the membrane as a helical span at residues 485-502; that stretch reads QSLWLAVIAVVLLLILLL.

Belongs to the ABC1 family. UbiB subfamily.

The protein localises to the cell inner membrane. The protein operates within cofactor biosynthesis; ubiquinone biosynthesis [regulation]. In terms of biological role, is probably a protein kinase regulator of UbiI activity which is involved in aerobic coenzyme Q (ubiquinone) biosynthesis. This Neisseria meningitidis serogroup A / serotype 4A (strain DSM 15465 / Z2491) protein is Probable protein kinase UbiB.